A 67-amino-acid polypeptide reads, in one-letter code: Large ribosomal subunit protein bL31 (67 aa).

The protein belongs to the bacterial ribosomal protein bL31 family. Type A subfamily. Part of the 50S ribosomal subunit.

Functionally, binds the 23S rRNA. This Finegoldia magna (strain ATCC 29328 / DSM 20472 / WAL 2508) (Peptostreptococcus magnus) protein is Large ribosomal subunit protein bL31.